The sequence spans 423 residues: CinA-like protein (423 aa).

The protein belongs to the CinA family.

The protein is CinA-like protein of Desulforapulum autotrophicum (strain ATCC 43914 / DSM 3382 / VKM B-1955 / HRM2) (Desulfobacterium autotrophicum).